The primary structure comprises 296 residues: Protoheme IX farnesyltransferase (296 aa).

Residues 1–9 (MMFKQYLQV) are Cytoplasmic-facing. Residues 10 to 28 (TKPGIIFGNLISVIGGFLL) form a helical membrane-spanning segment. Over 29–37 (ASKGSIDYP) the chain is Periplasmic. A helical transmembrane segment spans residues 38-56 (LFIYTLVGVSLVVASGCVF). Residues 57-78 (NNYIDRDIDRKMERTKNRVLVK) are Cytoplasmic-facing. Residues 79–97 (GLISPAVSLVYATLLGIAG) form a helical membrane-spanning segment. Residues 98-107 (FMLLWFGANP) lie on the Periplasmic side of the membrane. Residues 108–126 (LACWLGVMGFVVYVGVYSL) form a helical membrane-spanning segment. Residues 127–197 (YMKRHSVYGT…YQAANIPVLP (71 aa)) lie on the Cytoplasmic side of the membrane. A helical membrane pass occupies residues 198–216 (VVKGISVAKNHITLYIIAF). The Periplasmic portion of the chain corresponds to 217-228 (AVATLMLSLGGY). Residues 229–247 (AGYKYLVVAAAVSVWWLGM) form a helical membrane-spanning segment. The Cytoplasmic portion of the chain corresponds to 248-268 (ALRGYKVADDRIWARKLFGFS). Residues 269–287 (IIAITALSVMMSVDFMVPD) form a helical membrane-spanning segment. The Periplasmic segment spans residues 288–296 (SHTLLAAVW).

It belongs to the UbiA prenyltransferase family. Protoheme IX farnesyltransferase subfamily.

The protein resides in the cell inner membrane. It catalyses the reaction heme b + (2E,6E)-farnesyl diphosphate + H2O = Fe(II)-heme o + diphosphate. Its pathway is porphyrin-containing compound metabolism; heme O biosynthesis; heme O from protoheme: step 1/1. Converts heme B (protoheme IX) to heme O by substitution of the vinyl group on carbon 2 of heme B porphyrin ring with a hydroxyethyl farnesyl side group. The protein is Protoheme IX farnesyltransferase of Shigella flexneri.